Consider the following 341-residue polypeptide: L-threonine 3-dehydrogenase (341 aa).

Cysteine 38 is a binding site for Zn(2+). Residues threonine 40 and histidine 43 each act as charge relay system in the active site. Residues histidine 63, glutamate 64, cysteine 93, cysteine 96, cysteine 99, and cysteine 107 each coordinate Zn(2+). NAD(+) is bound by residues isoleucine 175, aspartate 195, arginine 200, 262-264 (LGI), and 286-287 (IY).

This sequence belongs to the zinc-containing alcohol dehydrogenase family. As to quaternary structure, homotetramer. Zn(2+) is required as a cofactor.

Its subcellular location is the cytoplasm. It carries out the reaction L-threonine + NAD(+) = (2S)-2-amino-3-oxobutanoate + NADH + H(+). It functions in the pathway amino-acid degradation; L-threonine degradation via oxydo-reductase pathway; glycine from L-threonine: step 1/2. Catalyzes the NAD(+)-dependent oxidation of L-threonine to 2-amino-3-ketobutyrate. This is L-threonine 3-dehydrogenase from Escherichia coli O17:K52:H18 (strain UMN026 / ExPEC).